A 92-amino-acid polypeptide reads, in one-letter code: uncharacterized protein (92 aa).

This is an uncharacterized protein from Sulfolobus spindle-shape virus 1 (SSV1).